Consider the following 514-residue polypeptide: 1-pyrroline-5-carboxylate dehydrogenase (514 aa).

Catalysis depends on residues Glu-286 and Cys-320.

It belongs to the aldehyde dehydrogenase family. RocA subfamily.

It catalyses the reaction L-glutamate 5-semialdehyde + NAD(+) + H2O = L-glutamate + NADH + 2 H(+). It functions in the pathway amino-acid degradation; L-proline degradation into L-glutamate; L-glutamate from L-proline: step 2/2. The chain is 1-pyrroline-5-carboxylate dehydrogenase from Staphylococcus aureus (strain MW2).